Consider the following 266-residue polypeptide: Tryptophan synthase alpha chain (266 aa).

Catalysis depends on proton acceptor residues glutamate 47 and aspartate 58.

It belongs to the TrpA family. As to quaternary structure, tetramer of two alpha and two beta chains.

Its subcellular location is the plastid. The protein resides in the chloroplast. The catalysed reaction is (1S,2R)-1-C-(indol-3-yl)glycerol 3-phosphate + L-serine = D-glyceraldehyde 3-phosphate + L-tryptophan + H2O. It functions in the pathway amino-acid biosynthesis; L-tryptophan biosynthesis; L-tryptophan from chorismate: step 5/5. In terms of biological role, the alpha subunit is responsible for the aldol cleavage of indoleglycerol phosphate to indole and glyceraldehyde 3-phosphate. This is Tryptophan synthase alpha chain from Cyanidium caldarium (Red alga).